The following is a 96-amino-acid chain: MYFHSTAIILFLNKIDLFEIKITHTNITVAFPDYEGPRERDCALEYIRVQFISLNNNKNRKIYQHVTSATDTARIQVVIDMLFDIIISASLKMVGV.

A G-alpha domain is found at 2 to 96 (YFHSTAIILF…ISASLKMVGV (95 aa)). The segment at 9–16 (ILFLNKID) is G1 motif. GTP contacts are provided by residues 13–16 (NKID) and Ala-69. The G2 motif stretch occupies residues 67–72 (TSATDT).

This sequence belongs to the G-alpha family. As to quaternary structure, g proteins are composed of 3 units; alpha, beta and gamma. The alpha chain contains the guanine nucleotide binding site. As to expression, expressed in ASJ neurons.

In terms of biological role, guanine nucleotide-binding proteins (G proteins) are involved as modulators or transducers in various transmembrane signaling systems. Plays a role in innate immunity and maintaining survival in response to metabolites of E.coli. This might be by regulating the expression and signaling of genes such as lys-8, ins-7 and daf-28. Has a role in lifespan to promote longevity. This chain is Guanine nucleotide-binding protein alpha-9 subunit, found in Caenorhabditis elegans.